The primary structure comprises 432 residues: Glutamate-1-semialdehyde 2,1-aminomutase (432 aa).

Position 270 is an N6-(pyridoxal phosphate)lysine (Lys270).

It belongs to the class-III pyridoxal-phosphate-dependent aminotransferase family. HemL subfamily. Homodimer. The cofactor is pyridoxal 5'-phosphate.

The protein localises to the cytoplasm. The catalysed reaction is (S)-4-amino-5-oxopentanoate = 5-aminolevulinate. Its pathway is porphyrin-containing compound metabolism; protoporphyrin-IX biosynthesis; 5-aminolevulinate from L-glutamyl-tRNA(Glu): step 2/2. The protein is Glutamate-1-semialdehyde 2,1-aminomutase of Acinetobacter baumannii (strain ACICU).